The primary structure comprises 393 residues: NAD(P)H-quinone oxidoreductase subunit H, chloroplastic (393 aa).

This sequence belongs to the complex I 49 kDa subunit family. As to quaternary structure, NDH is composed of at least 16 different subunits, 5 of which are encoded in the nucleus.

It localises to the plastid. It is found in the chloroplast thylakoid membrane. It catalyses the reaction a plastoquinone + NADH + (n+1) H(+)(in) = a plastoquinol + NAD(+) + n H(+)(out). The catalysed reaction is a plastoquinone + NADPH + (n+1) H(+)(in) = a plastoquinol + NADP(+) + n H(+)(out). In terms of biological role, NDH shuttles electrons from NAD(P)H:plastoquinone, via FMN and iron-sulfur (Fe-S) centers, to quinones in the photosynthetic chain and possibly in a chloroplast respiratory chain. The immediate electron acceptor for the enzyme in this species is believed to be plastoquinone. Couples the redox reaction to proton translocation, and thus conserves the redox energy in a proton gradient. The polypeptide is NAD(P)H-quinone oxidoreductase subunit H, chloroplastic (Barbarea verna (Land cress)).